Reading from the N-terminus, the 340-residue chain is Ketol-acid reductoisomerase (NADP(+)) (340 aa).

Positions 1 to 183 (MAITVYYDKD…GGGRTGIIET (183 aa)) constitute a KARI N-terminal Rossmann domain. Residues 26–29 (FGSQ), Arg49, Ser52, Ser54, and 84–87 (DEIQ) contribute to the NADP(+) site. His109 is a catalytic residue. Gly135 contacts NADP(+). Residues 184–329 (TFKAETETDL…RNLRAMMPWI (146 aa)) form the KARI C-terminal knotted domain. The Mg(2+) site is built by Asp192, Glu196, Glu228, and Glu232. Ser253 is a substrate binding site.

Belongs to the ketol-acid reductoisomerase family. Requires Mg(2+) as cofactor.

The enzyme catalyses (2R)-2,3-dihydroxy-3-methylbutanoate + NADP(+) = (2S)-2-acetolactate + NADPH + H(+). It carries out the reaction (2R,3R)-2,3-dihydroxy-3-methylpentanoate + NADP(+) = (S)-2-ethyl-2-hydroxy-3-oxobutanoate + NADPH + H(+). It participates in amino-acid biosynthesis; L-isoleucine biosynthesis; L-isoleucine from 2-oxobutanoate: step 2/4. The protein operates within amino-acid biosynthesis; L-valine biosynthesis; L-valine from pyruvate: step 2/4. In terms of biological role, involved in the biosynthesis of branched-chain amino acids (BCAA). Catalyzes an alkyl-migration followed by a ketol-acid reduction of (S)-2-acetolactate (S2AL) to yield (R)-2,3-dihydroxy-isovalerate. In the isomerase reaction, S2AL is rearranged via a Mg-dependent methyl migration to produce 3-hydroxy-3-methyl-2-ketobutyrate (HMKB). In the reductase reaction, this 2-ketoacid undergoes a metal-dependent reduction by NADPH to yield (R)-2,3-dihydroxy-isovalerate. The sequence is that of Ketol-acid reductoisomerase (NADP(+)) from Campylobacter jejuni subsp. jejuni serotype O:2 (strain ATCC 700819 / NCTC 11168).